Consider the following 374-residue polypeptide: Putative glutamate--cysteine ligase 2 (374 aa).

The protein belongs to the glutamate--cysteine ligase type 2 family. YbdK subfamily.

The enzyme catalyses L-cysteine + L-glutamate + ATP = gamma-L-glutamyl-L-cysteine + ADP + phosphate + H(+). ATP-dependent carboxylate-amine ligase which exhibits weak glutamate--cysteine ligase activity. The chain is Putative glutamate--cysteine ligase 2 from Acidovorax sp. (strain JS42).